A 93-amino-acid chain; its full sequence is Putative sodium channel toxin Ts41 (93 aa).

An N-terminal signal peptide occupies residues 1–23 (MKIGVLFTIISMLCLLEVRKICS). 4 cysteine pairs are disulfide-bonded: Cys22–Cys87, Cys39–Cys62, Cys48–Cys67, and Cys52–Cys69. An LCN-type CS-alpha/beta domain is found at 26–88 (EGGYPRYFSF…FWNVYRKYCK (63 aa)).

This sequence belongs to the long (4 C-C) scorpion toxin superfamily. In terms of tissue distribution, expressed by the venom gland.

The protein localises to the secreted. Its function is as follows. The edited BmKBTx-like may modulate voltage-gated sodium channels (Nav). The non-edited form is able to form a heterodimer. In orthologs, a heterodimer with LVP beta-chain induces lipolysis in rat adipocytes, which is mediated through the beta-2 adrenergic receptor pathway (ADRB2). Since no LVP beta-chains have been identified in the venom of this scorpion, it is possible that this protein is not involved in a lipolysis process. The protein is Putative sodium channel toxin Ts41 of Tityus serrulatus (Brazilian scorpion).